The sequence spans 203 residues: Holliday junction branch migration complex subunit RuvA (203 aa).

The interval 1-64 (MIGRLRGTLA…EDAQLLYGFI (64 aa)) is domain I. The domain II stretch occupies residues 65–143 (GKRDRDFFRE…AWEVVPSMFA (79 aa)). Residues 144-154 (LVPNQPDMPAG) are flexible linker. A domain III region spans residues 155-203 (QVASAESDAVSALISLGYKPQEASKAVSAIKDKNLSSEDMIRRALKGMI).

The protein belongs to the RuvA family. Homotetramer. Forms an RuvA(8)-RuvB(12)-Holliday junction (HJ) complex. HJ DNA is sandwiched between 2 RuvA tetramers; dsDNA enters through RuvA and exits via RuvB. An RuvB hexamer assembles on each DNA strand where it exits the tetramer. Each RuvB hexamer is contacted by two RuvA subunits (via domain III) on 2 adjacent RuvB subunits; this complex drives branch migration. In the full resolvosome a probable DNA-RuvA(4)-RuvB(12)-RuvC(2) complex forms which resolves the HJ.

The protein resides in the cytoplasm. Functionally, the RuvA-RuvB-RuvC complex processes Holliday junction (HJ) DNA during genetic recombination and DNA repair, while the RuvA-RuvB complex plays an important role in the rescue of blocked DNA replication forks via replication fork reversal (RFR). RuvA specifically binds to HJ cruciform DNA, conferring on it an open structure. The RuvB hexamer acts as an ATP-dependent pump, pulling dsDNA into and through the RuvAB complex. HJ branch migration allows RuvC to scan DNA until it finds its consensus sequence, where it cleaves and resolves the cruciform DNA. This is Holliday junction branch migration complex subunit RuvA from Pseudomonas fluorescens (strain SBW25).